A 168-amino-acid polypeptide reads, in one-letter code: Phosphopantetheine adenylyltransferase (168 aa).

A substrate-binding site is contributed by Thr-13. ATP-binding positions include 13–14 (TF) and His-21. Substrate contacts are provided by Lys-45, Leu-78, and Arg-92. Residues 93 to 95 (GLR), Glu-103, and 128 to 134 (TQFISSG) each bind ATP.

This sequence belongs to the bacterial CoaD family. In terms of assembly, homohexamer. The cofactor is Mg(2+).

Its subcellular location is the cytoplasm. It carries out the reaction (R)-4'-phosphopantetheine + ATP + H(+) = 3'-dephospho-CoA + diphosphate. It participates in cofactor biosynthesis; coenzyme A biosynthesis; CoA from (R)-pantothenate: step 4/5. In terms of biological role, reversibly transfers an adenylyl group from ATP to 4'-phosphopantetheine, yielding dephospho-CoA (dPCoA) and pyrophosphate. The polypeptide is Phosphopantetheine adenylyltransferase (Wolbachia sp. subsp. Drosophila simulans (strain wRi)).